Reading from the N-terminus, the 116-residue chain is Large ribosomal subunit protein bL20 (116 aa).

The protein belongs to the bacterial ribosomal protein bL20 family.

In terms of biological role, binds directly to 23S ribosomal RNA and is necessary for the in vitro assembly process of the 50S ribosomal subunit. It is not involved in the protein synthesizing functions of that subunit. The chain is Large ribosomal subunit protein bL20 from Helicobacter pylori (strain Shi470).